The chain runs to 124 residues: Acidic phospholipase A2 BA2 (124 aa).

7 cysteine pairs are disulfide-bonded: cysteine 26–cysteine 116, cysteine 28–cysteine 44, cysteine 43–cysteine 95, cysteine 49–cysteine 124, cysteine 50–cysteine 88, cysteine 57–cysteine 81, and cysteine 75–cysteine 86. Positions 27, 29, and 31 each coordinate Ca(2+). Histidine 47 is a catalytic residue. A Ca(2+)-binding site is contributed by aspartate 48. Residue aspartate 89 is part of the active site.

It belongs to the phospholipase A2 family. Group II subfamily. D49 sub-subfamily. The cofactor is Ca(2+). As to expression, expressed by the venom gland.

The protein resides in the secreted. The catalysed reaction is a 1,2-diacyl-sn-glycero-3-phosphocholine + H2O = a 1-acyl-sn-glycero-3-phosphocholine + a fatty acid + H(+). In terms of biological role, PLA2 catalyzes the calcium-dependent hydrolysis of the 2-acyl groups in 3-sn-phosphoglycerides. This chain is Acidic phospholipase A2 BA2, found in Gloydius halys (Chinese water mocassin).